The primary structure comprises 288 residues: 33 kDa chaperonin (288 aa).

2 disulfide bridges follow: C237-C239 and C270-C273.

It belongs to the HSP33 family. Under oxidizing conditions two disulfide bonds are formed involving the reactive cysteines. Under reducing conditions zinc is bound to the reactive cysteines and the protein is inactive.

The protein localises to the cytoplasm. Functionally, redox regulated molecular chaperone. Protects both thermally unfolding and oxidatively damaged proteins from irreversible aggregation. Plays an important role in the bacterial defense system toward oxidative stress. In Agathobacter rectalis (strain ATCC 33656 / DSM 3377 / JCM 17463 / KCTC 5835 / VPI 0990) (Eubacterium rectale), this protein is 33 kDa chaperonin.